Here is a 1449-residue protein sequence, read N- to C-terminus: ABC transporter G family member 21 (1449 aa).

Basic and acidic residues predominate over residues 1 to 10; that stretch reads MEEYELREIA. Residues 1 to 49 form a disordered region; sequence MEEYELREIALQEGGSNLDINTPPNYDNPVGDGSSPPDSPDIQKSENQF. Over residues 14-25 the composition is skewed to polar residues; that stretch reads GGSNLDINTPPN. One can recognise an ABC transporter 1 domain in the interval 130-383; that stretch reads ISFFNLFKPS…FIDLGFDCEP (254 aa). The region spanning 488–731 is the ABC transmembrane type-2 1 domain; that stretch reads WGDKFSLISR…ILSVEGKDYL (244 aa). A run of 5 helical transmembrane segments spans residues 519 to 539, 577 to 597, 602 to 622, 634 to 654, and 747 to 767; these read IPGL…NAFL, IPLT…MFGL, GKFF…TNLF, ISQN…GYTI, and FITY…MEYF. In terms of domain architecture, ABC transporter 2 spans 818 to 1062; the sequence is FTWQNINYTV…LTSYFERYGV (245 aa). 854–861 contacts ATP; sequence GSSGAGKT. In terms of domain architecture, ABC transmembrane type-2 2 spans 1152-1386; that stretch reads FYTYGSFIQS…PISEPLTGYV (235 aa). 6 helical membrane-spanning segments follow: residues 1155–1175, 1188–1208, 1228–1248, 1266–1286, 1296–1316, and 1423–1443; these read YGSF…FWSL, FIFE…PQFI, FAIS…TIFF, FYFW…GQAV, AHTL…VMVI, and LALI…FVYI.

The protein belongs to the ABC transporter superfamily. ABCG family. PDR (TC 3.A.1.205) subfamily.

The protein localises to the membrane. The polypeptide is ABC transporter G family member 21 (abcG21) (Dictyostelium discoideum (Social amoeba)).